The primary structure comprises 372 residues: Probable butyrate kinase (372 aa).

Belongs to the acetokinase family.

It is found in the cytoplasm. It catalyses the reaction butanoate + ATP = butanoyl phosphate + ADP. The polypeptide is Probable butyrate kinase (Oleidesulfovibrio alaskensis (strain ATCC BAA-1058 / DSM 17464 / G20) (Desulfovibrio alaskensis)).